Consider the following 387-residue polypeptide: Cysteine desulfurase IscS (387 aa).

Pyridoxal 5'-phosphate-binding positions include 73-74 (AT), Asn155, Gln183, and 203-205 (SAH). N6-(pyridoxal phosphate)lysine is present on Lys206. Residue Thr241 coordinates pyridoxal 5'-phosphate. Cys328 acts as the Cysteine persulfide intermediate in catalysis. Residue Cys328 participates in [2Fe-2S] cluster binding.

This sequence belongs to the class-V pyridoxal-phosphate-dependent aminotransferase family. NifS/IscS subfamily. In terms of assembly, homodimer. Forms a heterotetramer with IscU, interacts with other sulfur acceptors. Pyridoxal 5'-phosphate is required as a cofactor.

The protein resides in the cytoplasm. It catalyses the reaction (sulfur carrier)-H + L-cysteine = (sulfur carrier)-SH + L-alanine. It participates in cofactor biosynthesis; iron-sulfur cluster biosynthesis. Master enzyme that delivers sulfur to a number of partners involved in Fe-S cluster assembly, tRNA modification or cofactor biosynthesis. Catalyzes the removal of elemental sulfur atoms from cysteine to produce alanine. Functions as a sulfur delivery protein for Fe-S cluster synthesis onto IscU, an Fe-S scaffold assembly protein, as well as other S acceptor proteins. This Helicobacter pylori (strain J99 / ATCC 700824) (Campylobacter pylori J99) protein is Cysteine desulfurase IscS.